The primary structure comprises 307 residues: tRNA pseudouridine synthase B (307 aa).

Asp-38 acts as the Nucleophile in catalysis.

It belongs to the pseudouridine synthase TruB family. Type 1 subfamily.

The catalysed reaction is uridine(55) in tRNA = pseudouridine(55) in tRNA. Responsible for synthesis of pseudouridine from uracil-55 in the psi GC loop of transfer RNAs. The sequence is that of tRNA pseudouridine synthase B from Bacillus cereus (strain ATCC 14579 / DSM 31 / CCUG 7414 / JCM 2152 / NBRC 15305 / NCIMB 9373 / NCTC 2599 / NRRL B-3711).